The chain runs to 776 residues: DNA topoisomerase 1 (776 aa).

The Toprim domain occupies 1-111; the sequence is MKLVIVESPA…VESDDFFKRV (111 aa). Glu7 and Asp80 together coordinate Mg(2+). A Topo IA-type catalytic domain is found at 132–568; sequence DTNLVNAQQA…FWRGFNHNIE (437 aa). The interval 166-171 is interaction with DNA; the sequence is SAGRVQ. The active-site O-(5'-phospho-DNA)-tyrosine intermediate is the Tyr304. Residues 600 to 627 form a C4-type zinc finger; sequence CPSCKTGQLSLKLGKFGAFLACSNYPEC.

This sequence belongs to the type IA topoisomerase family. As to quaternary structure, monomer. Requires Mg(2+) as cofactor.

The catalysed reaction is ATP-independent breakage of single-stranded DNA, followed by passage and rejoining.. In terms of biological role, releases the supercoiling and torsional tension of DNA, which is introduced during the DNA replication and transcription, by transiently cleaving and rejoining one strand of the DNA duplex. Introduces a single-strand break via transesterification at a target site in duplex DNA. The scissile phosphodiester is attacked by the catalytic tyrosine of the enzyme, resulting in the formation of a DNA-(5'-phosphotyrosyl)-enzyme intermediate and the expulsion of a 3'-OH DNA strand. The free DNA strand then undergoes passage around the unbroken strand, thus removing DNA supercoils. Finally, in the religation step, the DNA 3'-OH attacks the covalent intermediate to expel the active-site tyrosine and restore the DNA phosphodiester backbone. This Rickettsia prowazekii (strain Madrid E) protein is DNA topoisomerase 1.